A 485-amino-acid polypeptide reads, in one-letter code: Forkhead box protein N3 (485 aa).

The tract at residues 1-21 (MGPVMPPSKKPESPGISVSSG) is disordered. Residues Ser83, Ser85, and Ser97 each carry the phosphoserine modification. Positions 86–108 (PVQDLDDDTPPSPAHSDMPYDAR) are disordered. A DNA-binding region (fork-head) is located at residues 114 to 210 (KPPYSFSCLI…QALKKTPYHS (97 aa)). Positions 315-454 (RTESEPSCGS…DEEMKEAAGS (140 aa)) are disordered. Residues 338 to 359 (SSAKSSHARSTSPASDCVSSSS) are compositionally biased toward low complexity. Residues 382–404 (HESHSETEEDDRKCSPKEAKDAL) show a composition bias toward basic and acidic residues. The segment covering 412-424 (QHKKRQHFAKARK) has biased composition (basic residues). A Phosphoserine modification is found at Ser443.

Interacts through its C-terminus with the C-terminus of SNW1/SKIP.

It is found in the nucleus. Its function is as follows. Acts as a transcriptional repressor. May be involved in DNA damage-inducible cell cycle arrests (checkpoints). The polypeptide is Forkhead box protein N3 (FOXN3) (Sus scrofa (Pig)).